The primary structure comprises 243 residues: Terpene cyclase atmB (243 aa).

7 helical membrane-spanning segments follow: residues 19–39 (IADVFVIGMGIGWIINYVGMV), 48–68 (YGMAIMPLCCNIAWEIVYGLI), 78–98 (GVFLSGLTINLGVIYTAIKFG), 112–132 (LPLIFMLGILGFLTGHLALAA), 134–154 (IGPALAYNWGAAFCQLLLSVG), 169–189 (SYTLWLSRFLGSFSVVISAWL), and 205–225 (LILWCLFAWLVVDGSYGVCFY).

This sequence belongs to the paxB family.

The protein localises to the membrane. Terpene cyclase; part of the ATM2 gene cluster that mediates the biosynthesis of aflatrem, a tremorgenic mycotoxin with acute neurotoxic effects. Synthesis of geranylgeranyl diphosphate (GGPP) by AtmG (a GGPP synthase) precedes condensation of GGPP with indole 3-glycerol phosphate, followed by epoxidation and cyclization by AtmM (a FAD-dependent monooxygenase) and AtmC (a prenyltransferase) to produce paspaline. AtmB is also essential for paspaline production, but its exact role has not been identified yet. AtmP, a cytochrome P450 monooxygenase, subsequently converts paspaline to 13-desoxypaxilline via PC-M6 by removal of the C-30 methyl group and oxidation at C-10. AtmQ, a cytochrome P450 monooxygenase, then catalyzes the oxidation of 13-desoxypaxilline, first at C-7 to produce paspalicine and then at C-13 to form paspalinine. Finally, AtmD prenylates paspalinine to form aflatrem. In Aspergillus flavus, this protein is Terpene cyclase atmB.